The chain runs to 88 residues: Small ribosomal subunit protein uS15 (88 aa).

The span at 1–20 shows a compositional bias: basic and acidic residues; that stretch reads MLATEKKQELIDQYKRHEGD. The disordered stretch occupies residues 1–21; sequence MLATEKKQELIDQYKRHEGDT.

The protein belongs to the universal ribosomal protein uS15 family. As to quaternary structure, part of the 30S ribosomal subunit. Forms a bridge to the 50S subunit in the 70S ribosome, contacting the 23S rRNA.

Its function is as follows. One of the primary rRNA binding proteins, it binds directly to 16S rRNA where it helps nucleate assembly of the platform of the 30S subunit by binding and bridging several RNA helices of the 16S rRNA. Forms an intersubunit bridge (bridge B4) with the 23S rRNA of the 50S subunit in the ribosome. The polypeptide is Small ribosomal subunit protein uS15 (Syntrophotalea carbinolica (strain DSM 2380 / NBRC 103641 / GraBd1) (Pelobacter carbinolicus)).